The sequence spans 110 residues: FMRFamide-like neuropeptides 11 (110 aa).

The first 22 residues, 1–22 (MTQFSALALLLIVFVAASFAQS), serve as a signal peptide directing secretion. The propeptide occupies 23-29 (YDDVSAE). Residues F40 and F54 each carry the phenylalanine amide modification. The interval 60-85 (LDEEDFAPESPLQGKRNGAPQPFVRF) is disordered. The residue at position 72 (Q72) is a Glutamine amide. F85 is modified (phenylalanine amide). Positions 88–110 (SGQLDHMHDLLSTLQKLKFANNK) are excised as a propeptide.

Belongs to the FARP (FMRFamide related peptide) family. In terms of tissue distribution, each flp gene is expressed in a distinct set of neurons. Flp-11 is expressed in the DD, VD and DVB motor neurons, the PVC and URX interneurons, and the AUA, BAG, DA, LUA, and SAB neurons. Also expressed in head muscle, socket or sheath cells and uterine cells. Expressed exclusively in PHC sensory neurons in males. Expressed in AVK and RIS interneurons.

The protein localises to the secreted. FMRFamides and FMRFamide-like peptides are neuropeptides. Induces sleep-like quiescence behavior following release from RIS interneuron. Helps to sustain locomotion stop after gamma-aminobutyric acid (GABA) induces fast slowing response. Inhibits the late-stage body bend swimming frequency in animals through several receptors including frpr-3, npr-4 and npr-22. Its function is as follows. Potent inhibitor of the activity of the dissected pharyngeal myogenic muscle system. Acts as a ligand for the npr-22 receptor in vitro. In terms of biological role, acts as a ligand for the npr-22 receptor in vitro. This chain is FMRFamide-like neuropeptides 11, found in Caenorhabditis elegans.